A 356-amino-acid chain; its full sequence is MDSTYIGSYGRLRVYQTEFFSRQQIDQMLSMTDPKDVSAFLYNGPYREDYDSLSAVFKDPDLTEMAINRHMVRNNRLVLFAIPPLAKNAVVAYLSKWDIENIKTVISAKFLGHGIREAEPFLVSFRDIPLGIMSGTLTNEDYRNMINLPNIEAILNYLARFGYGTYMMQFLEDYRKTGDISPMLYSLDRYYYMNLLSALKYYRGDEAPVLNYVRSDIDRQNIVTMLKGKVLKIPFERMSSGIIDGGNIGVNRLREIYSSQDAVSVADALKQYYDLEEPKKKYMETGDLYHFDIAIRNIIARRFLDTMSMLPLSLDSLFYFILRSEIERHNLRTIYLSKVNGMPREITESLLITEMM.

It belongs to the V-ATPase V0D/AC39 subunit family. As to quaternary structure, has multiple subunits with at least A(3), B(3), C, D, E, F, H, I and proteolipid K(x).

It is found in the cell membrane. Its function is as follows. Component of the A-type ATP synthase that produces ATP from ADP in the presence of a proton gradient across the membrane. The chain is A-type ATP synthase subunit C from Thermoplasma acidophilum (strain ATCC 25905 / DSM 1728 / JCM 9062 / NBRC 15155 / AMRC-C165).